The primary structure comprises 265 residues: Undecaprenyl-diphosphatase (265 aa).

A run of 8 helical transmembrane segments spans residues 1 to 21 (MDIF…FLPI), 39 to 59 (QGVG…VLYF), 84 to 104 (ALAW…LALL), 114 to 134 (ASVI…ADWL), 144 to 164 (LNWK…VPGT), 187 to 207 (FSFL…LLEV), 218 to 238 (GFLI…HFFL), and 244 to 264 (VGMW…YAVL).

Belongs to the UppP family.

It localises to the cell inner membrane. The catalysed reaction is di-trans,octa-cis-undecaprenyl diphosphate + H2O = di-trans,octa-cis-undecaprenyl phosphate + phosphate + H(+). Its function is as follows. Catalyzes the dephosphorylation of undecaprenyl diphosphate (UPP). Confers resistance to bacitracin. This is Undecaprenyl-diphosphatase from Marinobacter nauticus (strain ATCC 700491 / DSM 11845 / VT8) (Marinobacter aquaeolei).